The sequence spans 321 residues: tRNA dimethylallyltransferase (321 aa).

Position 24–31 (24–31 (GPTASGKS)) interacts with ATP. Position 26 to 31 (26 to 31 (TASGKS)) interacts with substrate. Interaction with substrate tRNA stretches follow at residues 49–52 (DSMQ) and 172–176 (QRIVR).

This sequence belongs to the IPP transferase family. In terms of assembly, monomer. It depends on Mg(2+) as a cofactor.

The catalysed reaction is adenosine(37) in tRNA + dimethylallyl diphosphate = N(6)-dimethylallyladenosine(37) in tRNA + diphosphate. Catalyzes the transfer of a dimethylallyl group onto the adenine at position 37 in tRNAs that read codons beginning with uridine, leading to the formation of N6-(dimethylallyl)adenosine (i(6)A). The polypeptide is tRNA dimethylallyltransferase (Mesorhizobium japonicum (strain LMG 29417 / CECT 9101 / MAFF 303099) (Mesorhizobium loti (strain MAFF 303099))).